A 249-amino-acid polypeptide reads, in one-letter code: Type III pantothenate kinase (249 aa).

6-13 (DCGNSFIK) is an ATP binding site. Substrate-binding positions include tyrosine 93 and 100–103 (GMDR). Aspartate 102 (proton acceptor) is an active-site residue. Aspartate 122 contacts K(+). ATP is bound at residue threonine 125. Position 181 (threonine 181) interacts with substrate.

It belongs to the type III pantothenate kinase family. In terms of assembly, homodimer. NH4(+) is required as a cofactor. It depends on K(+) as a cofactor.

Its subcellular location is the cytoplasm. It carries out the reaction (R)-pantothenate + ATP = (R)-4'-phosphopantothenate + ADP + H(+). The protein operates within cofactor biosynthesis; coenzyme A biosynthesis; CoA from (R)-pantothenate: step 1/5. Its function is as follows. Catalyzes the phosphorylation of pantothenate (Pan), the first step in CoA biosynthesis. This is Type III pantothenate kinase from Pseudomonas putida (strain ATCC 700007 / DSM 6899 / JCM 31910 / BCRC 17059 / LMG 24140 / F1).